The chain runs to 361 residues: Tetraacyldisaccharide 4'-kinase (361 aa).

ATP is bound at residue 68-75; it reads TVGGTGKT.

The protein belongs to the LpxK family.

It carries out the reaction a lipid A disaccharide + ATP = a lipid IVA + ADP + H(+). It functions in the pathway glycolipid biosynthesis; lipid IV(A) biosynthesis; lipid IV(A) from (3R)-3-hydroxytetradecanoyl-[acyl-carrier-protein] and UDP-N-acetyl-alpha-D-glucosamine: step 6/6. In terms of biological role, transfers the gamma-phosphate of ATP to the 4'-position of a tetraacyldisaccharide 1-phosphate intermediate (termed DS-1-P) to form tetraacyldisaccharide 1,4'-bis-phosphate (lipid IVA). This is Tetraacyldisaccharide 4'-kinase from Pelobacter propionicus (strain DSM 2379 / NBRC 103807 / OttBd1).